The sequence spans 86 residues: SEED MATURATION PROTEIN 1 (86 aa).

Residues 52–86 (RIEKGKEQSAASGDQTQIQRDIKDIKGTRTDDSPR) are disordered. Polar residues predominate over residues 60–70 (SAASGDQTQIQ). The span at 71–86 (RDIKDIKGTRTDDSPR) shows a compositional bias: basic and acidic residues.

This sequence belongs to the LEA type 3 family.

Functionally, protein chaperone involved in seed maturation and dormancy maintenance after high temperature fluctuation (e.g. secondary dormancy after 3 days at 40 degrees Celsius), probably by protecting heat labile proteins required for secondary dormancy (e.g. G6PDH, HOP3, SR45, ECP63, SCL33, RPL32B, ChlADR1, MSBP1, MBF1B, At3g01690, At1g15280, At1g15290, At2g31410, At1g11630, At1g65090, EMB2279, EMB1674 and RPL35C). The protein is SEED MATURATION PROTEIN 1 of Arabidopsis thaliana (Mouse-ear cress).